A 553-amino-acid chain; its full sequence is Fusion glycoprotein F0 (553 aa).

An N-terminal signal peptide occupies residues 1–31 (MGSRSSTRIPVPLMLTVRVALALSCVCPTSS). The Extracellular portion of the chain corresponds to 32 to 500 (LDGRPLAAAG…VNVKLTSTSA (469 aa)). 4 cysteine pairs are disulfide-bonded: Cys-76-Cys-199, Cys-338-Cys-347, Cys-362-Cys-370, and Cys-394-Cys-399. Asn-85 is a glycosylation site (N-linked (GlcNAc...) asparagine; by host). A fusion peptide region spans residues 117–141 (LIGAIIGGAALGVATAAQITAASAL). Positions 142–170 (ILANQNAANILRLKESIAATNEAVHEVTD) form a coiled coil. A glycan (N-linked (GlcNAc...) asparagine; by host) is linked at Asn-191. An N-linked (GlcNAc...) asparagine; by host glycan is attached at Asn-366. Asn-447 and Asn-471 each carry an N-linked (GlcNAc...) asparagine; by host glycan. A coiled-coil region spans residues 466–491 (ELGNVNNSISNALDKLEESNSKLDKV). Residues 501–521 (LITYIVLTVISLVCGILSLVL) traverse the membrane as a helical segment. At 522–553 (ACYLMYKQKAQQKTLLWLGNNTLDQMRATTKM) the chain is on the cytoplasmic side. Cys-523 carries S-palmitoyl cysteine; by host lipidation.

Belongs to the paramyxoviruses fusion glycoprotein family. In terms of assembly, homotrimer of disulfide-linked F1-F2. The inactive precursor F0 is glycosylated and proteolytically cleaved into F1 and F2 to be functionally active. The cleavage is mediated by cellular proteases during the transport and maturation of the polypeptide.

It localises to the virion membrane. Its subcellular location is the host cell membrane. Functionally, class I viral fusion protein. Under the current model, the protein has at least 3 conformational states: pre-fusion native state, pre-hairpin intermediate state, and post-fusion hairpin state. During viral and plasma cell membrane fusion, the heptad repeat (HR) regions assume a trimer-of-hairpins structure, positioning the fusion peptide in close proximity to the C-terminal region of the ectodomain. The formation of this structure appears to drive apposition and subsequent fusion of viral and plasma cell membranes. Directs fusion of viral and cellular membranes leading to delivery of the nucleocapsid into the cytoplasm. This fusion is pH independent and occurs directly at the outer cell membrane. The trimer of F1-F2 (F protein) probably interacts with HN at the virion surface. Upon HN binding to its cellular receptor, the hydrophobic fusion peptide is unmasked and interacts with the cellular membrane, inducing the fusion between cell and virion membranes. Later in infection, F proteins expressed at the plasma membrane of infected cells could mediate fusion with adjacent cells to form syncytia, a cytopathic effect that could lead to tissue necrosis. The chain is Fusion glycoprotein F0 (F) from Gallus gallus (Chicken).